A 289-amino-acid chain; its full sequence is Oxaloacetate decarboxylase (289 aa).

Residue serine 50 participates in substrate binding. Position 88 (aspartate 88) interacts with Mg(2+). The substrate site is built by arginine 159 and histidine 235.

The protein belongs to the isocitrate lyase family. Oxaloacetate decarboxylase subfamily. As to quaternary structure, homotetramer; dimer of dimers. The cofactor is Mg(2+).

It catalyses the reaction oxaloacetate + H(+) = pyruvate + CO2. Its function is as follows. Catalyzes the decarboxylation of oxaloacetate into pyruvate. Seems to play a role in maintaining cellular concentrations of bicarbonate and pyruvate. This chain is Oxaloacetate decarboxylase, found in Pseudomonas fluorescens (strain SBW25).